The sequence spans 199 residues: Recombination protein RecR (199 aa).

Residues 58–73 (CKKCFNLTSEDECEIC) form a C4-type zinc finger. Residues 81–175 (KLICVVSETK…KVTRIAYGLP (95 aa)) enclose the Toprim domain.

The protein belongs to the RecR family.

In terms of biological role, may play a role in DNA repair. It seems to be involved in an RecBC-independent recombinational process of DNA repair. It may act with RecF and RecO. The polypeptide is Recombination protein RecR (Prochlorococcus marinus (strain AS9601)).